Reading from the N-terminus, the 126-residue chain is Fluoride-specific ion channel FluC 1 (126 aa).

4 helical membrane passes run 1–21 (MAGS…GAWL), 38–58 (WGTF…LALY), 67–87 (LALL…TFAV), and 99–119 (FVSL…AGVG). 2 residues coordinate Na(+): Gly77 and Ser80.

This sequence belongs to the fluoride channel Fluc/FEX (TC 1.A.43) family.

The protein localises to the cell inner membrane. It carries out the reaction fluoride(in) = fluoride(out). Its activity is regulated as follows. Na(+) is not transported, but it plays an essential structural role and its presence is essential for fluoride channel function. Its function is as follows. Fluoride-specific ion channel. Important for reducing fluoride concentration in the cell, thus reducing its toxicity. This is Fluoride-specific ion channel FluC 1 from Synechococcus sp. (strain CC9902).